The sequence spans 430 residues: Probable sugar isomerase mlr5709 (430 aa).

3 residues coordinate Mn(2+): histidine 257, aspartate 289, and aspartate 291.

It belongs to the rhamnose isomerase family. Requires Mn(2+) as cofactor.

The sequence is that of Probable sugar isomerase mlr5709 from Mesorhizobium japonicum (strain LMG 29417 / CECT 9101 / MAFF 303099) (Mesorhizobium loti (strain MAFF 303099)).